A 316-amino-acid chain; its full sequence is LIM/homeobox protein lim-6 (316 aa).

LIM zinc-binding domains lie at 40-101 (KLCS…LYGK) and 102-163 (RCRR…ICNF). A DNA-binding region (homeobox) is located at residues 186–245 (PKRPRTILNAQQRRQFKTAFERSSKPSRKVREQLANETGLSVRVVQVWFQNQRAKIKKLN). The segment at 244-297 (LNKKDSDSGDTFKHGPGSEGRSTEDIRSSDDEEESVINLDADEVETSETSSYTD) is disordered. Residues 246-256 (KKDSDSGDTFK) show a composition bias toward basic and acidic residues. Residues 273–289 (DDEEESVINLDADEVET) are compositionally biased toward acidic residues.

The protein resides in the nucleus. Functionally, transcription factor. Required for the terminal differentiation of sensory- and motor-neurons, especially GABAergic neurons, and for morphological aspects of uterine development. Plays a role in the cell-type-specific regulation of glutamic acid decarboxylase unc-25. Involved in promoting sleep-like behavioral quiescence, acting by modulating expression of transcription factor aptf-1 in the single sleep-active ring interneuron RIS. Plays a role in regulation of RIS differentiation. Required for the functional asymmetry of the ASER and ASEL chemosensory neuron pair, conferring the ability to discriminate sodium from chloride, perhaps by modulating expression of receptor-type guanylate cyclases, such as gcy-5. Involved in regulating postembryonic axon maintenance in the ventral nerve cord, acting in concert with LIM homeobox protein ceh-14, via modulation of expression of immunoglobulin domain zig genes in the interneuron PVT. May play a role in the functions of the excretory gland cell. In Caenorhabditis elegans, this protein is LIM/homeobox protein lim-6.